Consider the following 324-residue polypeptide: Olfactory receptor 51D1 (324 aa).

The Extracellular segment spans residues 1–38 (MQKPQLLVPIIATSNGNLVHAAYFLLVGIPGLGPTIHF). Residues 39–59 (WLAFPLCFMYALATLGNLTIV) form a helical membrane-spanning segment. Residues 60 to 67 (LIIRVERR) are Cytoplasmic-facing. The chain crosses the membrane as a helical span at residues 68–88 (LHEPMYLFLAMLSTIDLVLSS). The Extracellular portion of the chain corresponds to 89–112 (ITMPKMASLFLMGIQEIEFNICLA). The cysteines at positions 110 and 202 are disulfide-linked. A helical transmembrane segment spans residues 113 to 133 (QMFLIHALSAVESAVLLAMAF). The Cytoplasmic portion of the chain corresponds to 134–152 (DRFVAICHPLRHASVLTGC). Residues 153–173 (TVAKIGLSALTRGFVFFFPLP) traverse the membrane as a helical segment. Residues 174–209 (FILKWLSYCQTHTVTHSFCLHQDIMKLSCTDTRVNV) lie on the Extracellular side of the membrane. Residues 210–230 (VYGLFIILSVMGVDSLFIGFS) traverse the membrane as a helical segment. Residues 231–250 (YILILWAVLELSSRRAALKA) are Cytoplasmic-facing. The helical transmembrane segment at 251 to 271 (FNTCISHLCAVLVFYVPLIGL) threads the bilayer. Residues 272–285 (SVVHRLGGPTSLLH) are Extracellular-facing. The chain crosses the membrane as a helical span at residues 286–306 (VVMANTYLLLPPVVNPLVYGA). The Cytoplasmic segment spans residues 307 to 324 (KTKEICSRVLCMFSQGGK).

The protein belongs to the G-protein coupled receptor 1 family.

The protein localises to the cell membrane. Its function is as follows. Odorant receptor. In Homo sapiens (Human), this protein is Olfactory receptor 51D1 (OR51D1).